The following is a 25-amino-acid chain: Omega-conotoxin MVIIB (25 aa).

3 disulfides stabilise this stretch: Cys1–Cys16, Cys8–Cys20, and Cys15–Cys25. Cys25 is subject to Cysteine amide.

The protein belongs to the conotoxin O1 superfamily. As to expression, expressed by the venom duct.

The protein localises to the secreted. Omega-conotoxins act at presynaptic membranes, they bind and block voltage-gated calcium channels (Cav). This chain is Omega-conotoxin MVIIB, found in Conus magus (Magical cone).